The chain runs to 122 residues: Large ribosomal subunit protein uL14 (122 aa).

Belongs to the universal ribosomal protein uL14 family. In terms of assembly, part of the 50S ribosomal subunit. Forms a cluster with proteins L3 and L19. In the 70S ribosome, L14 and L19 interact and together make contacts with the 16S rRNA in bridges B5 and B8.

Its function is as follows. Binds to 23S rRNA. Forms part of two intersubunit bridges in the 70S ribosome. The sequence is that of Large ribosomal subunit protein uL14 from Variovorax paradoxus (strain S110).